The following is a 67-amino-acid chain: UPF0337 protein BCE_3655 (67 aa).

Belongs to the UPF0337 (CsbD) family.

In Bacillus cereus (strain ATCC 10987 / NRS 248), this protein is UPF0337 protein BCE_3655.